The following is a 59-amino-acid chain: Large ribosomal subunit protein bL33 (59 aa).

The protein belongs to the bacterial ribosomal protein bL33 family.

The polypeptide is Large ribosomal subunit protein bL33 (Borreliella afzelii (strain PKo) (Borrelia afzelii)).